The chain runs to 254 residues: Ferritin, chloroplastic (254 aa).

Residues 1–48 (MALAPSKVSPFSGFSLSDGVGAVRNPTCSVSLSFLNKKVGSRNLGVSA) constitute a chloroplast transit peptide. Residues 49 to 81 (STVPLTGVIFEPFEEVKKEELAVPTAGQVSLAR) form an extension peptide (EP) region. Residues 82-235 (QYYADECESA…EYVAQLRMVG (154 aa)) form the Ferritin-like diiron domain. Fe cation is bound by residues Glu99, Glu134, His137, Glu183, and Gln217.

Belongs to the ferritin family. In terms of assembly, oligomer of 24 subunits. There are two types of subunits: L (light) chain and H (heavy) chain. The major chain can be light or heavy, depending on the species and tissue type. The functional molecule forms a roughly spherical shell with a diameter of 12 nm and contains a central cavity into which the insoluble mineral iron core is deposited.

The protein resides in the plastid. Its subcellular location is the chloroplast. It catalyses the reaction 4 Fe(2+) + O2 + 4 H(+) = 4 Fe(3+) + 2 H2O. Stores iron in a soluble, non-toxic, readily available form. Important for iron homeostasis. Has ferroxidase activity. Iron is taken up in the ferrous form and deposited as ferric hydroxides after oxidation. The protein is Ferritin, chloroplastic (PFE) of Phaseolus vulgaris (Kidney bean).